A 469-amino-acid polypeptide reads, in one-letter code: Interstitial collagenase (469 aa).

An N-terminal signal peptide occupies residues 1–19 (MHSFPPLLLLLFWGVVSHS). Residues 20 to 99 (FPATLETQEQ…PRCGVPDVAQ (80 aa)) constitute a propeptide, activation peptide. Phosphoserine is present on S57. Positions 90 to 97 (PRCGVPDV) match the Cysteine switch motif. C92 lines the Zn(2+) pocket. The segment at 98–276 (AQFVLTEGNP…VQPIGPQTPK (179 aa)) is metalloprotease. The N-linked (GlcNAc...) asparagine glycan is linked to N120. Ca(2+) contacts are provided by D124 and D158. The Zn(2+) site is built by H168 and D170. The Ca(2+) site is built by D175, G176, G178, and N180. H183 serves as a coordination point for Zn(2+). Residues G190, G192, and D194 each coordinate Ca(2+). Residue H196 participates in Zn(2+) binding. Residues D198, E199, and E201 each contribute to the Ca(2+) site. H218 provides a ligand contact to Zn(2+). Residue E219 is part of the active site. Residues H222 and H228 each coordinate Zn(2+). T274 bears the Phosphothreonine mark. 4 Hemopexin repeats span residues 275–324 (PKAC…WPQL), 325–371 (PNGL…FGFP), 374–422 (VKHI…FPGI), and 423–466 (GHKV…WFNC). C278 and C466 form a disulfide bridge. Ca(2+) is bound by residues D285 and E329. The residue at position 360 (Y360) is a Phosphotyrosine; by PKDCC. Residues D378 and D427 each coordinate Ca(2+).

It belongs to the peptidase M10A family. As to quaternary structure, (Microbial infection) Interacts with HIV-1 Tat. It depends on Ca(2+) as a cofactor. The cofactor is Zn(2+). Post-translationally, undergoes autolytic cleavage to two major forms (22 kDa and 27 kDa). A minor form (25 kDa) is the glycosylated form of the 22 kDa form. The 27 kDa form has no activity while the 22/25 kDa form can act as activator for collagenase. In terms of processing, tyrosine phosphorylated in platelets by PKDCC/VLK.

It localises to the secreted. Its subcellular location is the extracellular space. The protein localises to the extracellular matrix. It catalyses the reaction Cleavage of the triple helix of collagen at about three-quarters of the length of the molecule from the N-terminus, at 775-Gly-|-Ile-776 in the alpha1(I) chain. Cleaves synthetic substrates and alpha-macroglobulins at bonds where P1' is a hydrophobic residue.. With respect to regulation, can be activated without removal of the activation peptide. Functionally, cleaves collagens of types I, II, and III at one site in the helical domain. Also cleaves collagens of types VII and X. In case of HIV infection, interacts and cleaves the secreted viral Tat protein, leading to a decrease in neuronal Tat's mediated neurotoxicity. This is Interstitial collagenase (MMP1) from Homo sapiens (Human).